Here is a 3263-residue protein sequence, read N- to C-terminus: Protein unc-80 (3263 aa).

Disordered regions lie at residues 491-527, 627-666, 939-1010, 1042-1076, 1380-1475, 1633-1660, and 1680-1721; these read KSAL…LDEG, NDTE…SNPS, PTTS…DDGV, DEEI…QVKA, SRQS…RMRA, LRKQ…RESA, and MQQE…LPEK. Basic and acidic residues predominate over residues 499-508; the sequence is NENRRTDHQR. The span at 509-519 shows a compositional bias: polar residues; the sequence is MPSTQKSVSGS. The segment covering 644–658 has biased composition (low complexity); the sequence is TTNSRRSSLNTLSRR. Polar residues-rich tracts occupy residues 956 to 967 and 981 to 1005; these read GAQSQKQSNDQA and SGGT…TVSS. Residues 1042–1055 show a composition bias toward acidic residues; sequence DEEISDNENEEGTS. Residues 1393 to 1402 show a composition bias toward polar residues; it reads QGSTKSTTYV. Positions 1435–1447 are enriched in basic residues; it reads HKRKSFRNRKQSK. Polar residues-rich tracts occupy residues 1460–1469 and 1633–1653; these read GSLTSQQSPI and LRKQ…QSTA. Over residues 1680 to 1710 the composition is skewed to basic and acidic residues; the sequence is MQQEKEKEKEKEKEEKDALKKQSVEQDHSST. Transmembrane regions (helical) follow at residues 2088–2108, 2318–2338, 2352–2372, 2953–2973, and 2995–3015; these read AIGM…GLYF, AFMF…MIMH, YISI…FLIM, AIYL…APMW, and AFVD…LPMI. 2 disordered regions span residues 3078-3166 and 3178-3198; these read YTPT…RTRS and RKSR…SVEL. The span at 3124-3135 shows a compositional bias: acidic residues; sequence IPEDPEDSEDVI. Positions 3138 to 3166 are enriched in polar residues; the sequence is NSTGQVTSRISKSPSIPLNKTHQSSRTRS.

Belongs to the unc-80 family. As to expression, expressed in the nervous system. Expressed in both acetylcholine and GABA motor neurons.

Its subcellular location is the membrane. Functionally, probable component of the nca-1 sodium channel complex, a cation channel that regulates neuronal activity by transmitting depolarization signals to synapses. Regulates the transition from slow to rapid forms of locomotion. Required for localization of nca-1 along axons and in non-synaptic regions. Contributes to endocytosis defects in synaptojanin mutants. Involved in the control of anasthetic response to halothane. The sequence is that of Protein unc-80 (unc-80) from Caenorhabditis elegans.